Here is a 156-residue protein sequence, read N- to C-terminus: ATP synthase subunit b (156 aa).

The chain crosses the membrane as a helical span at residues 7 to 26; it reads ILGQAIAFVLFVWFCMKYVW.

This sequence belongs to the ATPase B chain family. As to quaternary structure, F-type ATPases have 2 components, F(1) - the catalytic core - and F(0) - the membrane proton channel. F(1) has five subunits: alpha(3), beta(3), gamma(1), delta(1), epsilon(1). F(0) has three main subunits: a(1), b(2) and c(10-14). The alpha and beta chains form an alternating ring which encloses part of the gamma chain. F(1) is attached to F(0) by a central stalk formed by the gamma and epsilon chains, while a peripheral stalk is formed by the delta and b chains.

It is found in the cell inner membrane. Its function is as follows. F(1)F(0) ATP synthase produces ATP from ADP in the presence of a proton or sodium gradient. F-type ATPases consist of two structural domains, F(1) containing the extramembraneous catalytic core and F(0) containing the membrane proton channel, linked together by a central stalk and a peripheral stalk. During catalysis, ATP synthesis in the catalytic domain of F(1) is coupled via a rotary mechanism of the central stalk subunits to proton translocation. Component of the F(0) channel, it forms part of the peripheral stalk, linking F(1) to F(0). The sequence is that of ATP synthase subunit b from Pectobacterium atrosepticum (strain SCRI 1043 / ATCC BAA-672) (Erwinia carotovora subsp. atroseptica).